Here is a 340-residue protein sequence, read N- to C-terminus: Anthranilate phosphoribosyltransferase (340 aa).

5-phospho-alpha-D-ribose 1-diphosphate contacts are provided by residues glycine 80, 83 to 84, threonine 88, 90 to 93, 108 to 116, and serine 120; these read GD, NIST, and KHGNRAMSS. Glycine 80 is an anthranilate binding site. Serine 92 is a Mg(2+) binding site. Asparagine 111 serves as a coordination point for anthranilate. Arginine 166 contributes to the anthranilate binding site. Residues aspartate 225 and glutamate 226 each contribute to the Mg(2+) site.

This sequence belongs to the anthranilate phosphoribosyltransferase family. As to quaternary structure, homodimer. It depends on Mg(2+) as a cofactor.

It carries out the reaction N-(5-phospho-beta-D-ribosyl)anthranilate + diphosphate = 5-phospho-alpha-D-ribose 1-diphosphate + anthranilate. Its pathway is amino-acid biosynthesis; L-tryptophan biosynthesis; L-tryptophan from chorismate: step 2/5. In terms of biological role, catalyzes the transfer of the phosphoribosyl group of 5-phosphorylribose-1-pyrophosphate (PRPP) to anthranilate to yield N-(5'-phosphoribosyl)-anthranilate (PRA). The protein is Anthranilate phosphoribosyltransferase of Chloroflexus aggregans (strain MD-66 / DSM 9485).